The following is a 20-amino-acid chain: Catechol 1,2-dioxygenase (20 aa).

This sequence belongs to the intradiol ring-cleavage dioxygenase family. As to quaternary structure, homodimer which dissociates into active monomeric subunits at high ionic strengths. Requires Fe(3+) as cofactor.

It carries out the reaction catechol + O2 = cis,cis-muconate + 2 H(+). The protein operates within aromatic compound metabolism; beta-ketoadipate pathway; 5-oxo-4,5-dihydro-2-furylacetate from catechol: step 1/3. This chain is Catechol 1,2-dioxygenase, found in Acinetobacter radioresistens.